The chain runs to 373 residues: Chaperone protein DnaJ (373 aa).

In terms of domain architecture, J spans 5 to 70 (DFYATLGVAR…EKRAMYDQYG (66 aa)). A CR-type zinc finger spans residues 134–212 (GVKKRINIPT…CRGAGRNKAV (79 aa)). 8 residues coordinate Zn(2+): C147, C150, C164, C167, C186, C189, C200, and C203. CXXCXGXG motif repeat units follow at residues 147–154 (CDVCNGSG), 164–171 (CPTCKGSG), 186–193 (CPTCHGAG), and 200–207 (CVKCRGAG).

The protein belongs to the DnaJ family. In terms of assembly, homodimer. Requires Zn(2+) as cofactor.

The protein resides in the cytoplasm. Its function is as follows. Participates actively in the response to hyperosmotic and heat shock by preventing the aggregation of stress-denatured proteins and by disaggregating proteins, also in an autonomous, DnaK-independent fashion. Unfolded proteins bind initially to DnaJ; upon interaction with the DnaJ-bound protein, DnaK hydrolyzes its bound ATP, resulting in the formation of a stable complex. GrpE releases ADP from DnaK; ATP binding to DnaK triggers the release of the substrate protein, thus completing the reaction cycle. Several rounds of ATP-dependent interactions between DnaJ, DnaK and GrpE are required for fully efficient folding. Also involved, together with DnaK and GrpE, in the DNA replication of plasmids through activation of initiation proteins. This Neisseria meningitidis serogroup C (strain 053442) protein is Chaperone protein DnaJ.